The following is a 426-amino-acid chain: Histidine--tRNA ligase (426 aa).

It belongs to the class-II aminoacyl-tRNA synthetase family. In terms of assembly, homodimer.

Its subcellular location is the cytoplasm. It catalyses the reaction tRNA(His) + L-histidine + ATP = L-histidyl-tRNA(His) + AMP + diphosphate + H(+). This chain is Histidine--tRNA ligase, found in Legionella pneumophila (strain Lens).